Here is a 1235-residue protein sequence, read N- to C-terminus: ATP-dependent helicase/nuclease subunit A (1235 aa).

One can recognise a UvrD-like helicase ATP-binding domain in the interval 12–482 (ALWTDDQWKA…IDLSQNFRSR (471 aa)). 33–40 (AAAGSGKT) serves as a coordination point for ATP. The UvrD-like helicase C-terminal domain maps to 509–800 (AAELTLGASF…RMMTIHASKG (292 aa)).

The protein belongs to the helicase family. AddA subfamily. In terms of assembly, heterodimer of AddA and AddB/RexB. It depends on Mg(2+) as a cofactor.

The enzyme catalyses Couples ATP hydrolysis with the unwinding of duplex DNA by translocating in the 3'-5' direction.. The catalysed reaction is ATP + H2O = ADP + phosphate + H(+). Functionally, the heterodimer acts as both an ATP-dependent DNA helicase and an ATP-dependent, dual-direction single-stranded exonuclease. Recognizes the chi site generating a DNA molecule suitable for the initiation of homologous recombination. The AddA nuclease domain is required for chi fragment generation; this subunit has the helicase and 3' -&gt; 5' nuclease activities. This chain is ATP-dependent helicase/nuclease subunit A, found in Listeria innocua serovar 6a (strain ATCC BAA-680 / CLIP 11262).